Reading from the N-terminus, the 209-residue chain is D-aminoacyl-tRNA deacylase 1 (209 aa).

Residues Val-4, Gln-6, and Cys-28 each coordinate Mg(2+). The short motif at 139-140 is the Gly-cisPro motif, important for rejection of L-amino acids element; sequence GP. Residues 142–209 form a disordered region; that stretch reads TIELESPAPG…EGDVSSEREP (68 aa). Basic and acidic residues-rich tracts occupy residues 159–170 and 181–194; these read QLSKLEKQQQRK and SSKERNTPRKEDRS. Residues Ser-197, Ser-204, and Ser-205 each carry the phosphoserine modification.

Belongs to the DTD family. Homodimer. Interacts with CDC45 and TOPBP1. Post-translationally, preferentially phosphorylated in cells arrested early in S phase. Phosphorylation in the C-terminus weakens the interaction with CDC45. Expressed in many adult and fetal tissues. Highest levels in testis, ovary, spleen and in adult and fetal brain.

It localises to the nucleus. The protein localises to the cytoplasm. The catalysed reaction is glycyl-tRNA(Ala) + H2O = tRNA(Ala) + glycine + H(+). It catalyses the reaction a D-aminoacyl-tRNA + H2O = a tRNA + a D-alpha-amino acid + H(+). Its function is as follows. Possible ATPase involved in DNA replication, may facilitate loading of CDC45 onto pre-replication complexes. In terms of biological role, an aminoacyl-tRNA editing enzyme that deacylates mischarged D-aminoacyl-tRNAs. Also deacylates mischarged glycyl-tRNA(Ala), protecting cells against glycine mischarging by AlaRS. Acts via tRNA-based rather than protein-based catalysis; rejects L-amino acids rather than detecting D-amino acids in the active site. By recycling D-aminoacyl-tRNA to D-amino acids and free tRNA molecules, this enzyme counteracts the toxicity associated with the formation of D-aminoacyl-tRNA entities in vivo and helps enforce protein L-homochirality. This is D-aminoacyl-tRNA deacylase 1 (DTD1) from Homo sapiens (Human).